Reading from the N-terminus, the 556-residue chain is 2-succinyl-5-enolpyruvyl-6-hydroxy-3-cyclohexene-1-carboxylate synthase (556 aa).

It belongs to the TPP enzyme family. MenD subfamily. In terms of assembly, homodimer. Mg(2+) is required as a cofactor. Mn(2+) serves as cofactor. It depends on thiamine diphosphate as a cofactor.

It catalyses the reaction isochorismate + 2-oxoglutarate + H(+) = 5-enolpyruvoyl-6-hydroxy-2-succinyl-cyclohex-3-ene-1-carboxylate + CO2. The protein operates within quinol/quinone metabolism; 1,4-dihydroxy-2-naphthoate biosynthesis; 1,4-dihydroxy-2-naphthoate from chorismate: step 2/7. It functions in the pathway quinol/quinone metabolism; menaquinone biosynthesis. Its function is as follows. Catalyzes the thiamine diphosphate-dependent decarboxylation of 2-oxoglutarate and the subsequent addition of the resulting succinic semialdehyde-thiamine pyrophosphate anion to isochorismate to yield 2-succinyl-5-enolpyruvyl-6-hydroxy-3-cyclohexene-1-carboxylate (SEPHCHC). The sequence is that of 2-succinyl-5-enolpyruvyl-6-hydroxy-3-cyclohexene-1-carboxylate synthase from Salmonella paratyphi B (strain ATCC BAA-1250 / SPB7).